The sequence spans 331 residues: Benzylsuccinate synthase activating enzyme (331 aa).

One can recognise a Radical SAM core domain in the interval 15–315 (QDGPGIRTTI…VTIGGIVGIA (301 aa)). Positions 29, 33, 36, 55, 58, 61, 65, 89, 92, 95, and 99 each coordinate [4Fe-4S] cluster. 35–37 (WCH) lines the S-adenosyl-L-methionine pocket. 4Fe-4S ferredoxin-type domains lie at 46–75 (QEFY…LVRN) and 80–109 (TIVQ…IVGQ). S-adenosyl-L-methionine contacts are provided by residues Gly-139, 189–191 (DLK), and His-263.

It belongs to the organic radical-activating enzymes family. [4Fe-4S] cluster serves as cofactor.

The catalysed reaction is glycyl-[protein] + reduced [flavodoxin] + S-adenosyl-L-methionine = glycin-2-yl radical-[protein] + semiquinone [flavodoxin] + 5'-deoxyadenosine + L-methionine + H(+). The protein operates within xenobiotic degradation; toluene degradation [regulation]. Functionally, activation of benzylsuccinate synthase under anaerobic conditions by generation of an organic free radical, using S-adenosylmethionine and reduced flavodoxin as cosubstrates to produce 5'-deoxy-adenosine. The protein is Benzylsuccinate synthase activating enzyme (bssD) of Thauera aromatica.